Consider the following 762-residue polypeptide: N,N-dimethylformamidase beta subunit (762 aa).

As to quaternary structure, heterotetramer of two DmfA1 (alpha) and two DmfA2 (beta) subunits.

It carries out the reaction N,N-dimethylformamide + H2O = dimethylamine + formate. In terms of biological role, hydrolyzes N,N-dimethylformamide, and to a lesser extent N,N-dimethylacetamide and N,N-diethylacetamide. Has no activity against the substituted amides N-methylformamide, N-ethylformamide, N-ethylformamide and N-methylacetamide or the unsubstituted amides formamide, nicotinamide, acetoamide, benzamide, acetamide and acrylamide. This Paracoccus aminophilus protein is N,N-dimethylformamidase beta subunit.